Here is a 455-residue protein sequence, read N- to C-terminus: Polyadenylation factor subunit 2 (455 aa).

WD repeat units lie at residues 80–119 (KVKH…FETI), 122–162 (AHDT…KELD), 164–203 (IHTE…QERV), 206–245 (GHHW…CVST), 248–288 (KFKH…NELM), 291–331 (RDEV…EKPI), and 337–376 (AHEK…DPNA). 2 disordered regions span residues 406–425 (EYGA…TQYN) and 430–455 (RVPE…GLSI). Over residues 432 to 446 (PEIKEPTPTTDKEQR) the composition is skewed to basic and acidic residues.

It is found in the nucleus. Required for 3'-end cleavage and polyadenylation of pre-mRNAs. Also involved in chromosome segregation where it has a role in chromosome attachment to the mitotic spindle. This Candida glabrata (strain ATCC 2001 / BCRC 20586 / JCM 3761 / NBRC 0622 / NRRL Y-65 / CBS 138) (Yeast) protein is Polyadenylation factor subunit 2 (PFS2).